The following is a 190-amino-acid chain: Threonylcarbamoyl-AMP synthase (190 aa).

The region spanning 7–190 (LGSIAQAVDV…ALTGERFRQG (184 aa)) is the YrdC-like domain.

It belongs to the SUA5 family. TsaC subfamily.

The protein resides in the cytoplasm. It carries out the reaction L-threonine + hydrogencarbonate + ATP = L-threonylcarbamoyladenylate + diphosphate + H2O. In terms of biological role, required for the formation of a threonylcarbamoyl group on adenosine at position 37 (t(6)A37) in tRNAs that read codons beginning with adenine. Catalyzes the conversion of L-threonine, HCO(3)(-)/CO(2) and ATP to give threonylcarbamoyl-AMP (TC-AMP) as the acyladenylate intermediate, with the release of diphosphate. The sequence is that of Threonylcarbamoyl-AMP synthase from Enterobacter sp. (strain 638).